A 222-amino-acid polypeptide reads, in one-letter code: Probable transaldolase (222 aa).

Catalysis depends on Lys-91, which acts as the Schiff-base intermediate with substrate.

Belongs to the transaldolase family. Type 3B subfamily.

Its subcellular location is the cytoplasm. It carries out the reaction D-sedoheptulose 7-phosphate + D-glyceraldehyde 3-phosphate = D-erythrose 4-phosphate + beta-D-fructose 6-phosphate. Its pathway is carbohydrate degradation; pentose phosphate pathway; D-glyceraldehyde 3-phosphate and beta-D-fructose 6-phosphate from D-ribose 5-phosphate and D-xylulose 5-phosphate (non-oxidative stage): step 2/3. Transaldolase is important for the balance of metabolites in the pentose-phosphate pathway. The sequence is that of Probable transaldolase from Chlorobaculum parvum (strain DSM 263 / NCIMB 8327) (Chlorobium vibrioforme subsp. thiosulfatophilum).